A 252-amino-acid chain; its full sequence is Aspartate/glutamate leucyltransferase (252 aa).

It belongs to the R-transferase family. Bpt subfamily.

The protein resides in the cytoplasm. It carries out the reaction N-terminal L-glutamyl-[protein] + L-leucyl-tRNA(Leu) = N-terminal L-leucyl-L-glutamyl-[protein] + tRNA(Leu) + H(+). The catalysed reaction is N-terminal L-aspartyl-[protein] + L-leucyl-tRNA(Leu) = N-terminal L-leucyl-L-aspartyl-[protein] + tRNA(Leu) + H(+). In terms of biological role, functions in the N-end rule pathway of protein degradation where it conjugates Leu from its aminoacyl-tRNA to the N-termini of proteins containing an N-terminal aspartate or glutamate. This Polynucleobacter necessarius subsp. necessarius (strain STIR1) protein is Aspartate/glutamate leucyltransferase.